Here is a 633-residue protein sequence, read N- to C-terminus: Threonine--tRNA ligase (633 aa).

The TGS domain maps to Met1–Thr61. The interval Asp242–Pro533 is catalytic. The Zn(2+) site is built by Cys333, His384, and His510.

Belongs to the class-II aminoacyl-tRNA synthetase family. Homodimer. The cofactor is Zn(2+).

It localises to the cytoplasm. The enzyme catalyses tRNA(Thr) + L-threonine + ATP = L-threonyl-tRNA(Thr) + AMP + diphosphate + H(+). Functionally, catalyzes the attachment of threonine to tRNA(Thr) in a two-step reaction: L-threonine is first activated by ATP to form Thr-AMP and then transferred to the acceptor end of tRNA(Thr). Also edits incorrectly charged L-seryl-tRNA(Thr). This chain is Threonine--tRNA ligase, found in Rickettsia bellii (strain OSU 85-389).